The following is a 668-amino-acid chain: Protein PLASTID TRANSCRIPTIONALLY ACTIVE 10 (668 aa).

The N-terminal 40 residues, Met-1–Arg-40, are a transit peptide targeting the chloroplast. An S1 motif domain is found at Gly-272–Arg-340. The segment covering Arg-362 to Glu-391 has biased composition (basic and acidic residues). The interval Arg-362–Leu-394 is disordered. Phosphoserine is present on Ser-434. Positions Lys-611–Asp-668 are disordered. Positions Gln-621–Asp-641 are enriched in acidic residues. Over residues Ser-646–Asp-668 the composition is skewed to polar residues.

In terms of assembly, component of the transcriptionally active chromosome (TAC) complexes. Interacts with PTAC7.

It localises to the plastid. The protein resides in the chloroplast. The sequence is that of Protein PLASTID TRANSCRIPTIONALLY ACTIVE 10 from Arabidopsis thaliana (Mouse-ear cress).